A 1036-amino-acid chain; its full sequence is Zinc finger protein 532 (1036 aa).

Disordered regions lie at residues 26 to 92 (PKAA…LHNG), 106 to 206 (GAKS…EAES), 220 to 265 (RKAE…PSSK), and 281 to 362 (AASD…KVRI). A compositionally biased stretch (basic and acidic residues) spans 32–52 (SGHDDHESHIKQNAHVDDDSH). Serine 130, serine 133, and serine 134 each carry phosphoserine. Residues 136–151 (EEFEDDEKIEVDDPPD) show a composition bias toward acidic residues. N6-acetyllysine is present on lysine 175. The span at 182–193 (ENSSKTGVSTSG) shows a compositional bias: polar residues. 2 stretches are compositionally biased toward basic and acidic residues: residues 194–205 (HTDKNKVKREAE) and 220–249 (RKAE…EKSD). The segment covering 253 to 265 (AAAASSKTKPSSK) has biased composition (low complexity). The span at 302-314 (EVNDSPKAADKSP) shows a compositional bias: basic and acidic residues. Serine 306 and serine 313 each carry phosphoserine. Over residues 336-353 (SVSSENSSKGSPSSPVGS) the composition is skewed to low complexity. Residue serine 433 is modified to Phosphoserine. Residues lysine 458 and lysine 515 each participate in a glycyl lysine isopeptide (Lys-Gly) (interchain with G-Cter in SUMO2) cross-link. The C2H2-type 1; degenerate zinc finger occupies 615–634 (YKCLECGDAFALEKSLSQHY). A C2H2-type 2; degenerate zinc finger spans residues 751–775 (LKCLECNEVFQDEPSLATHFQHAAD). A C2H2-type 3 zinc finger spans residues 784-807 (HPCRQCDKSFSSSHSLCRHNRIKH). The segment at 814–840 (YACSHCPDSRRTFTKRLMLERHIQLMH) adopts a C2H2-type 4; degenerate zinc-finger fold. A disordered region spans residues 847 to 877 (VKELSDDAGDVTNDEEEEAEIKEDAKVPSPK). Over residues 852 to 867 (DDAGDVTNDEEEEAEI) the composition is skewed to acidic residues. A compositionally biased stretch (basic and acidic residues) spans 868–877 (KEDAKVPSPK). Serine 875 carries the post-translational modification Phosphoserine. Residues lysine 879 and lysine 902 each participate in a glycyl lysine isopeptide (Lys-Gly) (interchain with G-Cter in SUMO2) cross-link. 2 C2H2-type zinc fingers span residues 938–961 (HQCR…FIVH) and 999–1021 (RKCK…MRTH). Residues 966–1000 (PQPVSKQNGAGEDSQQENKPSPEDEAAEGAASDRK) are disordered.

It belongs to the krueppel C2H2-type zinc-finger protein family.

It is found in the nucleus. In terms of biological role, may be involved in transcriptional regulation. The polypeptide is Zinc finger protein 532 (Znf532) (Mus musculus (Mouse)).